The primary structure comprises 307 residues: Agmatinase (307 aa).

Positions 128, 151, 153, 155, 232, and 234 each coordinate Mn(2+).

The protein belongs to the arginase family. Agmatinase subfamily. It depends on Mn(2+) as a cofactor.

The catalysed reaction is agmatine + H2O = urea + putrescine. It participates in amine and polyamine biosynthesis; putrescine biosynthesis via agmatine pathway; putrescine from agmatine: step 1/1. In terms of biological role, catalyzes the formation of putrescine from agmatine. The sequence is that of Agmatinase from Neisseria meningitidis serogroup C (strain 053442).